Reading from the N-terminus, the 893-residue chain is Alanine--tRNA ligase (893 aa).

Zn(2+) contacts are provided by histidine 573, histidine 577, cysteine 676, and histidine 680. The interval 853-872 is disordered; the sequence is LGGGGGGKDDLAQGGGQDPS.

The protein belongs to the class-II aminoacyl-tRNA synthetase family. It depends on Zn(2+) as a cofactor.

The protein resides in the cytoplasm. The catalysed reaction is tRNA(Ala) + L-alanine + ATP = L-alanyl-tRNA(Ala) + AMP + diphosphate. In terms of biological role, catalyzes the attachment of alanine to tRNA(Ala) in a two-step reaction: alanine is first activated by ATP to form Ala-AMP and then transferred to the acceptor end of tRNA(Ala). Also edits incorrectly charged Ser-tRNA(Ala) and Gly-tRNA(Ala) via its editing domain. This chain is Alanine--tRNA ligase, found in Kineococcus radiotolerans (strain ATCC BAA-149 / DSM 14245 / SRS30216).